Consider the following 634-residue polypeptide: Ankyrin repeat protein OPG025 (634 aa).

6 ANK repeats span residues 36-69, 70-100, 103-134, 175-211, 307-337, and 412-441; these read DGET…YKNI, NDFD…EINS, NGIN…PTCS, MGKT…EMRY, IQDL…TLYR, and HGCS…DINI.

This sequence belongs to the orthopoxvirus OPG025 family. Interacts with components of host SCF complex CUL1 and SKP1 and components of the cullin deneddylation/COP9 signalosome complex subunits COPS7A and COPS7B.

Its function is as follows. Plays a role in the inhibition of host immune repsonse by counteracting the action of interferons on early events in the viral replication cycle. The sequence is that of Ankyrin repeat protein OPG025 (OPG035) from Vaccinia virus (strain Western Reserve) (VACV).